A 437-amino-acid polypeptide reads, in one-letter code: Protein RecA (437 aa).

69–76 (GPESSGKT) contributes to the ATP binding site. A disordered region spans residues 343–437 (HDAAVRTSPD…GNGKSVKRKG (95 aa)). Polar residues-rich tracts occupy residues 350 to 371 (SPDT…SGSP), 380 to 391 (GAVNNSRDSTGG), and 400 to 426 (LNLS…NQKP).

It belongs to the RecA family.

The protein localises to the cytoplasm. Functionally, can catalyze the hydrolysis of ATP in the presence of single-stranded DNA, the ATP-dependent uptake of single-stranded DNA by duplex DNA, and the ATP-dependent hybridization of homologous single-stranded DNAs. It interacts with LexA causing its activation and leading to its autocatalytic cleavage. The protein is Protein RecA of Tropheryma whipplei (strain Twist) (Whipple's bacillus).